A 191-amino-acid chain; its full sequence is Protein Ves (191 aa).

Belongs to the Ves family.

The chain is Protein Ves from Escherichia coli (strain SE11).